The primary structure comprises 295 residues: Tyrosine recombinase XerD (295 aa).

Residues 1 to 85 (MNTIIEEYLN…TIRSFHQFAL (85 aa)) enclose the Core-binding (CB) domain. The Tyr recombinase domain maps to 106 to 289 (KLPDVLEIDE…SKSQIRKMYT (184 aa)). Catalysis depends on residues R146, K170, H241, R244, and H267. Y276 serves as the catalytic O-(3'-phospho-DNA)-tyrosine intermediate.

This sequence belongs to the 'phage' integrase family. XerD subfamily. Forms a cyclic heterotetrameric complex composed of two molecules of XerC and two molecules of XerD.

The protein localises to the cytoplasm. In terms of biological role, site-specific tyrosine recombinase, which acts by catalyzing the cutting and rejoining of the recombining DNA molecules. The XerC-XerD complex is essential to convert dimers of the bacterial chromosome into monomers to permit their segregation at cell division. It also contributes to the segregational stability of plasmids. This Staphylococcus epidermidis (strain ATCC 35984 / DSM 28319 / BCRC 17069 / CCUG 31568 / BM 3577 / RP62A) protein is Tyrosine recombinase XerD.